We begin with the raw amino-acid sequence, 221 residues long: Histone H1.3 (221 aa).

A compositionally biased stretch (low complexity) spans 1–17; the sequence is MSETAPLAPTIPAPAEK. Residues 1–43 are disordered; sequence MSETAPLAPTIPAPAEKTPVKKKAKKAGATAGKRKASGPPVSE. The residue at position 2 (S2) is an N-acetylserine. Residue S2 is modified to Phosphoserine. K17 is modified (N6-acetyllysine). At T18 the chain carries Phosphothreonine. The segment covering 20–36 has biased composition (basic residues); sequence VKKKAKKAGATAGKRKA. Residues K35, K47, and K53 each carry the N6-(beta-hydroxybutyryl)lysine modification. The region spanning 37–110 is the H15 domain; sequence SGPPVSELIT…GASGSFKLNK (74 aa). R55 carries the post-translational modification Citrulline. K65, K76, K86, and K91 each carry N6-(beta-hydroxybutyryl)lysine. The segment at 90 to 221 is disordered; that stretch reads SKGTLVQTKG…KAKKAAPKKK (132 aa). S105 carries the post-translational modification Phosphoserine; by PKC. An N6-(beta-hydroxybutyryl)lysine modification is found at K107. Composition is skewed to basic residues over residues 120-141, 150-161, and 170-179; these read KAKKAGAAKPRKPAGAAKKPKK, KSIKKTPKKVKK, and KVAKSAKKVK. An N6-(beta-hydroxybutyryl)lysine modification is found at K170. Positions 180 to 193 are enriched in low complexity; sequence TPQPKKAAKSPAKA. The span at 194 to 221 shows a compositional bias: basic residues; that stretch reads KAPKPKAAKPKSGKPKVTKAKKAAPKKK.

Belongs to the histone H1/H5 family. In terms of processing, H1 histones are progressively phosphorylated during the cell cycle, becoming maximally phosphorylated during late G2 phase and M phase, and being dephosphorylated sharply thereafter. Citrullination at Arg-55 (H1R54ci) by PADI4 takes place within the DNA-binding site of H1 and results in its displacement from chromatin and global chromatin decondensation, thereby promoting pluripotency and stem cell maintenance.

It is found in the nucleus. The protein localises to the chromosome. Functionally, histone H1 protein binds to linker DNA between nucleosomes forming the macromolecular structure known as the chromatin fiber. Histones H1 are necessary for the condensation of nucleosome chains into higher-order structured fibers. Also acts as a regulator of individual gene transcription through chromatin remodeling, nucleosome spacing and DNA methylation. This chain is Histone H1.3, found in Homo sapiens (Human).